We begin with the raw amino-acid sequence, 773 residues long: Membrane-bound aldehyde dehydrogenase [pyrroloquinoline-quinone] (773 aa).

The tat-type signal signal peptide spans 1–44; it reads MGRLNRFRLGKDGRREQASLSRRGFLVTSLGAGVMFGFARPSSA.

Requires pyrroloquinoline quinone as cofactor. In terms of processing, predicted to be exported by the Tat system. The position of the signal peptide cleavage has been experimentally proven.

The protein localises to the cell inner membrane. The enzyme catalyses an aldehyde + a quinone + H2O = a quinol + a carboxylate + H(+). The polypeptide is Membrane-bound aldehyde dehydrogenase [pyrroloquinoline-quinone] (Gluconacetobacter polyoxogenes (Acetobacter polyoxogenes)).